The sequence spans 193 residues: tRNA (cytidine(56)-2'-O)-methyltransferase (193 aa).

S-adenosyl-L-methionine is bound by residues Leu-86 and 115 to 119 (GGEKV).

This sequence belongs to the aTrm56 family. Homodimer.

The protein resides in the cytoplasm. The enzyme catalyses cytidine(56) in tRNA + S-adenosyl-L-methionine = 2'-O-methylcytidine(56) in tRNA + S-adenosyl-L-homocysteine + H(+). Its function is as follows. Specifically catalyzes the AdoMet-dependent 2'-O-ribose methylation of cytidine at position 56 in tRNAs. The chain is tRNA (cytidine(56)-2'-O)-methyltransferase from Haloquadratum walsbyi (strain DSM 16790 / HBSQ001).